The sequence spans 319 residues: Annexin A4 (319 aa).

At T7 the chain carries Phosphothreonine. S12 is subject to Phosphoserine. Annexin repeat units lie at residues F14 to T85, P86 to A157, A169 to K241, and S245 to G316. Residues K213, K293, and K300 each carry the N6-acetyllysine modification.

The protein belongs to the annexin family.

Its subcellular location is the zymogen granule membrane. Its function is as follows. Calcium/phospholipid-binding protein which promotes membrane fusion and is involved in exocytosis. The protein is Annexin A4 (Anxa4) of Mus musculus (Mouse).